The chain runs to 295 residues: Bis(5'-nucleosyl)-tetraphosphatase, symmetrical (295 aa).

The segment at 271–295 is disordered; the sequence is LSIEHPRHTHTPRRKAKKRHKRSPK. Over residues 277-295 the composition is skewed to basic residues; sequence RHTHTPRRKAKKRHKRSPK.

It belongs to the Ap4A hydrolase family.

It carries out the reaction P(1),P(4)-bis(5'-adenosyl) tetraphosphate + H2O = 2 ADP + 2 H(+). In terms of biological role, hydrolyzes diadenosine 5',5'''-P1,P4-tetraphosphate to yield ADP. The chain is Bis(5'-nucleosyl)-tetraphosphatase, symmetrical from Xylella fastidiosa (strain M23).